The primary structure comprises 106 residues: Putative membrane protein insertion efficiency factor (106 aa).

This sequence belongs to the UPF0161 family.

The protein localises to the cell inner membrane. Could be involved in insertion of integral membrane proteins into the membrane. In Methylacidiphilum infernorum (isolate V4) (Methylokorus infernorum (strain V4)), this protein is Putative membrane protein insertion efficiency factor.